Consider the following 102-residue polypeptide: NADH-quinone oxidoreductase subunit K (102 aa).

Transmembrane regions (helical) follow at residues I5–L25, I31–F51, and F66–F86.

Belongs to the complex I subunit 4L family. NDH-1 is composed of 14 different subunits. Subunits NuoA, H, J, K, L, M, N constitute the membrane sector of the complex.

Its subcellular location is the cell inner membrane. The catalysed reaction is a quinone + NADH + 5 H(+)(in) = a quinol + NAD(+) + 4 H(+)(out). Its function is as follows. NDH-1 shuttles electrons from NADH, via FMN and iron-sulfur (Fe-S) centers, to quinones in the respiratory chain. The immediate electron acceptor for the enzyme in this species is believed to be ubiquinone. Couples the redox reaction to proton translocation (for every two electrons transferred, four hydrogen ions are translocated across the cytoplasmic membrane), and thus conserves the redox energy in a proton gradient. The sequence is that of NADH-quinone oxidoreductase subunit K from Bartonella tribocorum (strain CIP 105476 / IBS 506).